The sequence spans 118 residues: Large ribosomal subunit protein bL19 (118 aa).

Belongs to the bacterial ribosomal protein bL19 family.

In terms of biological role, this protein is located at the 30S-50S ribosomal subunit interface and may play a role in the structure and function of the aminoacyl-tRNA binding site. In Helicobacter pylori (strain J99 / ATCC 700824) (Campylobacter pylori J99), this protein is Large ribosomal subunit protein bL19 (rplS).